Here is a 283-residue protein sequence, read N- to C-terminus: Thymidylate synthase (283 aa).

Arg-22 contacts dUMP. The Nucleophile role is filled by Cys-160. Residues 180 to 183 (RSCD), Asn-191, and 221 to 223 (HIY) contribute to the dUMP site. Asp-183 contacts (6R)-5,10-methylene-5,6,7,8-tetrahydrofolate. A (6R)-5,10-methylene-5,6,7,8-tetrahydrofolate-binding site is contributed by Ser-282.

Belongs to the thymidylate synthase family. Bacterial-type ThyA subfamily. Homodimer.

Its subcellular location is the cytoplasm. It catalyses the reaction dUMP + (6R)-5,10-methylene-5,6,7,8-tetrahydrofolate = 7,8-dihydrofolate + dTMP. It participates in pyrimidine metabolism; dTTP biosynthesis. In terms of biological role, catalyzes the reductive methylation of 2'-deoxyuridine-5'-monophosphate (dUMP) to 2'-deoxythymidine-5'-monophosphate (dTMP) while utilizing 5,10-methylenetetrahydrofolate (mTHF) as the methyl donor and reductant in the reaction, yielding dihydrofolate (DHF) as a by-product. This enzymatic reaction provides an intracellular de novo source of dTMP, an essential precursor for DNA biosynthesis. In Vibrio vulnificus (strain CMCP6), this protein is Thymidylate synthase.